The following is a 643-amino-acid chain: Asparagine synthetase domain-containing protein 1 (643 aa).

Cys2 (for GATase activity) is an active-site residue. Residues 2 to 184 (CGICCSVNFS…ASGLFRIDLK (183 aa)) enclose the Glutamine amidotransferase type-2 domain. In terms of domain architecture, Asparagine synthetase spans 285–601 (QFIDVLSVAV…GLTASALLPK (317 aa)).

This chain is Asparagine synthetase domain-containing protein 1 (ASNSD1), found in Homo sapiens (Human).